Here is a 574-residue protein sequence, read N- to C-terminus: Proline--tRNA ligase (574 aa).

The protein belongs to the class-II aminoacyl-tRNA synthetase family. ProS type 1 subfamily. As to quaternary structure, homodimer.

It localises to the cytoplasm. The enzyme catalyses tRNA(Pro) + L-proline + ATP = L-prolyl-tRNA(Pro) + AMP + diphosphate. Functionally, catalyzes the attachment of proline to tRNA(Pro) in a two-step reaction: proline is first activated by ATP to form Pro-AMP and then transferred to the acceptor end of tRNA(Pro). As ProRS can inadvertently accommodate and process non-cognate amino acids such as alanine and cysteine, to avoid such errors it has two additional distinct editing activities against alanine. One activity is designated as 'pretransfer' editing and involves the tRNA(Pro)-independent hydrolysis of activated Ala-AMP. The other activity is designated 'posttransfer' editing and involves deacylation of mischarged Ala-tRNA(Pro). The misacylated Cys-tRNA(Pro) is not edited by ProRS. The protein is Proline--tRNA ligase of Hahella chejuensis (strain KCTC 2396).